Reading from the N-terminus, the 339-residue chain is U11/U12 small nuclear ribonucleoprotein 48 kDa protein (339 aa).

The CHHC U11-48K-type zinc-finger motif lies at 55–82; it reads VVICPYDSNHHMPKSSLAKHMASCRLRK. 4 residues coordinate Zn(2+): C58, H64, H74, and C78. Residues K87 and K104 each participate in a glycyl lysine isopeptide (Lys-Gly) (interchain with G-Cter in SUMO2) cross-link. The segment at 255–339 is disordered; sequence HWQEEQEKAE…HSHKRRKQKI (85 aa). Basic residues predominate over residues 294–309; that stretch reads RHRRDRSRSPHKRKRN. Residues 310–328 are compositionally biased toward basic and acidic residues; the sequence is KDKDKNCESRRRKERDGER. Over residues 329-339 the composition is skewed to basic residues; that stretch reads HHSHKRRKQKI.

In terms of assembly, component of the U11/U12 snRNPs that are part of the U12-type spliceosome. Not found in the major spliceosome.

Its subcellular location is the nucleus. Likely involved in U12-type 5' splice site recognition. The chain is U11/U12 small nuclear ribonucleoprotein 48 kDa protein (SNRNP48) from Homo sapiens (Human).